Here is a 120-residue protein sequence, read N- to C-terminus: Small ribosomal subunit protein uS13 (120 aa).

The segment at 92–120 is disordered; sequence RRGLPCRGQRTRTNARTRKGPRKPIAGKK.

It belongs to the universal ribosomal protein uS13 family. In terms of assembly, part of the 30S ribosomal subunit. Forms a loose heterodimer with protein S19. Forms two bridges to the 50S subunit in the 70S ribosome.

Located at the top of the head of the 30S subunit, it contacts several helices of the 16S rRNA. In the 70S ribosome it contacts the 23S rRNA (bridge B1a) and protein L5 of the 50S subunit (bridge B1b), connecting the 2 subunits; these bridges are implicated in subunit movement. Contacts the tRNAs in the A and P-sites. In Laribacter hongkongensis (strain HLHK9), this protein is Small ribosomal subunit protein uS13.